A 496-amino-acid chain; its full sequence is Lysine--tRNA ligase (496 aa).

Mg(2+)-binding residues include Glu-409 and Glu-416.

It belongs to the class-II aminoacyl-tRNA synthetase family. In terms of assembly, homodimer. Requires Mg(2+) as cofactor.

It localises to the cytoplasm. It carries out the reaction tRNA(Lys) + L-lysine + ATP = L-lysyl-tRNA(Lys) + AMP + diphosphate. The chain is Lysine--tRNA ligase from Streptococcus pneumoniae (strain CGSP14).